Consider the following 335-residue polypeptide: N-acetyl-gamma-glutamyl-phosphate reductase (335 aa).

Cys156 is a catalytic residue.

The protein belongs to the NAGSA dehydrogenase family. Type 1 subfamily.

The protein localises to the cytoplasm. The catalysed reaction is N-acetyl-L-glutamate 5-semialdehyde + phosphate + NADP(+) = N-acetyl-L-glutamyl 5-phosphate + NADPH + H(+). The protein operates within amino-acid biosynthesis; L-arginine biosynthesis; N(2)-acetyl-L-ornithine from L-glutamate: step 3/4. Catalyzes the NADPH-dependent reduction of N-acetyl-5-glutamyl phosphate to yield N-acetyl-L-glutamate 5-semialdehyde. The polypeptide is N-acetyl-gamma-glutamyl-phosphate reductase (Aeromonas salmonicida (strain A449)).